The following is a 465-amino-acid chain: UDP-N-acetylmuramate--L-alanine ligase (465 aa).

112 to 118 lines the ATP pocket; sequence GTHGKTT.

The protein belongs to the MurCDEF family.

It localises to the cytoplasm. It catalyses the reaction UDP-N-acetyl-alpha-D-muramate + L-alanine + ATP = UDP-N-acetyl-alpha-D-muramoyl-L-alanine + ADP + phosphate + H(+). The protein operates within cell wall biogenesis; peptidoglycan biosynthesis. In terms of biological role, cell wall formation. The chain is UDP-N-acetylmuramate--L-alanine ligase from Burkholderia multivorans (strain ATCC 17616 / 249).